The primary structure comprises 54 residues: Ovomucoid (54 aa).

Positions 4 to 54 (VDCSGYPQSACPQDYVPFCGSDNKTYSNKCNFCNAVADSNGTLTLSHFGKC) constitute a Kazal-like domain. 3 cysteine pairs are disulfide-bonded: Cys-6–Cys-36, Cys-14–Cys-33, and Cys-22–Cys-54. Asn-43 carries N-linked (GlcNAc...) asparagine glycosylation.

Its subcellular location is the secreted. The protein is Ovomucoid of Gallirallus australis (Weka).